A 193-amino-acid chain; its full sequence is Ectoine TRAP transporter small permease protein TeaB (193 aa).

The next 4 membrane-spanning stretches (helical) occupy residues 33-55 (ILAL…RFAL), 65-82 (VNRI…GYAA), 103-125 (RALM…YYSV), and 145-167 (IFII…LFTA).

Belongs to the TRAP transporter small permease family. In terms of assembly, the complex comprises the extracytoplasmic solute receptor protein TeaA, and the two transmembrane proteins TeaB and TeaC.

The protein resides in the cell inner membrane. Its function is as follows. Part of the tripartite ATP-independent periplasmic (TRAP) transport system TeaABC involved in the uptake of ectoine and hydroxyectoine in response to osmotic upshock. Probably functions as a recovery system for synthesized ectoine that leaks out of the cell. The protein is Ectoine TRAP transporter small permease protein TeaB (teaB) of Halomonas elongata (strain ATCC 33173 / DSM 2581 / NBRC 15536 / NCIMB 2198 / 1H9).